The primary structure comprises 462 residues: A-type ATP synthase subunit B (462 aa).

The protein belongs to the ATPase alpha/beta chains family. As to quaternary structure, has multiple subunits with at least A(3), B(3), C, D, E, F, H, I and proteolipid K(x).

It is found in the cell membrane. Component of the A-type ATP synthase that produces ATP from ADP in the presence of a proton gradient across the membrane. The B chain is a regulatory subunit. The polypeptide is A-type ATP synthase subunit B (Cenarchaeum symbiosum (strain A)).